A 143-amino-acid polypeptide reads, in one-letter code: Nucleoside diphosphate kinase (143 aa).

ATP contacts are provided by Lys11, Phe59, Arg87, Thr93, Arg104, and Asn114. His117 serves as the catalytic Pros-phosphohistidine intermediate.

The protein belongs to the NDK family. In terms of assembly, homotetramer. It depends on Mg(2+) as a cofactor.

The protein resides in the cytoplasm. The catalysed reaction is dZDP + ATP = dZTP + ADP. It catalyses the reaction a 2'-deoxyribonucleoside 5'-diphosphate + ATP = a 2'-deoxyribonucleoside 5'-triphosphate + ADP. The enzyme catalyses a ribonucleoside 5'-diphosphate + ATP = a ribonucleoside 5'-triphosphate + ADP. Its pathway is purine metabolism. Its function is as follows. Major role in the synthesis of nucleoside triphosphates other than ATP. The ATP gamma phosphate is transferred to the NDP beta phosphate via a ping-pong mechanism, using a phosphorylated active-site intermediate. (Microbial infection) Catalyzes the phosphorylation of dZDP to dZTP, when the bacterium is infected by a phage that produces the substrate for the synthesis of dZTP (2- amino-2'-deoxyadenosine 5'-triphosphate), which is then used by the phage as a DNA polymerase substrate. The protein is Nucleoside diphosphate kinase of Acinetobacter baumannii (strain AB307-0294).